A 40-amino-acid chain; its full sequence is Photosystem II reaction center protein X (40 aa).

Over T1–I11 the chain is Lumenal. A helical membrane pass occupies residues G12–I28. Residues A29 to L40 lie on the Cytoplasmic side of the membrane.

This sequence belongs to the PsbX family. Type 1 subfamily. PSII is composed of 1 copy each of membrane proteins PsbA, PsbB, PsbC, PsbD, PsbE, PsbF, PsbH, PsbI, PsbJ, PsbK, PsbL, PsbM, PsbT, PsbX, PsbY, PsbZ, Psb30/Ycf12, peripheral proteins PsbO, CyanoQ (PsbQ), PsbU, PsbV and a large number of cofactors. It forms dimeric complexes. The cofactor is PSII binds multiple chlorophylls, carotenoids and specific lipids..

Its subcellular location is the cellular thylakoid membrane. In terms of biological role, involved in the binding and/or turnover of quinones at the Q(B) site of photosystem II (PSII). PSII is a light-driven water plastoquinone oxidoreductase, using light energy to abstract electrons from H(2)O, generating a proton gradient subsequently used for ATP formation. The polypeptide is Photosystem II reaction center protein X (Thermostichus vulcanus (Synechococcus vulcanus)).